The following is a 108-amino-acid chain: UPF0060 membrane protein SAR2425 (108 aa).

4 consecutive transmembrane segments (helical) span residues isoleucine 5–tryptophan 25, serine 31–phenylalanine 51, valine 60–aspartate 80, and lysine 86–serine 106.

This sequence belongs to the UPF0060 family.

It localises to the cell membrane. This chain is UPF0060 membrane protein SAR2425, found in Staphylococcus aureus (strain MRSA252).